Here is a 147-residue protein sequence, read N- to C-terminus: Probable inactive ribonuclease-like protein 12 (147 aa).

The N-terminal stretch at 1 to 20 (MIIMVIIFLVLLFWENEVND) is a signal peptide.

It belongs to the pancreatic ribonuclease family.

Its subcellular location is the secreted. Does not exhibit any ribonuclease activity. The protein is Probable inactive ribonuclease-like protein 12 (RNASE12) of Homo sapiens (Human).